A 2326-amino-acid chain; its full sequence is Probable voltage-dependent N-type calcium channel subunit alpha-1B (2326 aa).

The Cytoplasmic segment spans residues 1-83 (MARLGNDVPA…DNIIRKYAKR (83 aa)). The disordered stretch occupies residues 17 to 37 (AGGGRGANRHAGPQAGQRGMY). One copy of the I repeat lies at 75 to 351 (NIIRKYAKRI…LVLGVLSGEF (277 aa)). The helical transmembrane segment at 84-107 (ITEWPPFEYMILATIIANCIVLAL) threads the bilayer. The Extracellular segment spans residues 108-124 (EQHLPDGDKTPMSERLD). Residues 125–145 (DTEPYFIGIFCFEAGIKIIAL) form a helical membrane-spanning segment. Over 146 to 156 (GFAFHKGSYLR) the chain is Cytoplasmic. A helical membrane pass occupies residues 157 to 175 (NGWNVMDFVVVLTGILTTI). At 176-180 (GTDFD) the chain is on the extracellular side. A helical transmembrane segment spans residues 181 to 204 (LRTLRAVRVLRPLKLVSGIPSLQV). At 205 to 214 (VLKSIMKAMV) the chain is on the cytoplasmic side. Residues 215-237 (PLLQIGLLLFFAILMFAIIGLEF) traverse the membrane as a helical segment. At 238–323 (YMGKFHKTCF…TANDALGNTW (86 aa)) the chain is on the extracellular side. Asn-271 carries N-linked (GlcNAc...) asparagine glycosylation. A helical transmembrane segment spans residues 324–348 (NWLYFIPLIVIGSFFMLNLVLGVLS). Over 349 to 472 (GEFAKERERV…FFIRRMVKSQ (124 aa)) the chain is Cytoplasmic. Positions 371-388 (QQVEQEFNRYLRWIHIAE) are binding to the beta subunit. One copy of the II repeat lies at 458 to 702 (EKRFRFFIRR…VFLAIAVDNL (245 aa)). Residues 473 to 491 (SFYWIVLCLVGLNTLCVAI) form a helical membrane-spanning segment. The Extracellular segment spans residues 492-501 (VHYDQPPLLT). The helical transmembrane segment at 502-524 (DALYFAEFVFLGLFLTEMSLKMY) threads the bilayer. Residues 525-534 (GLGPRNYFHS) lie on the Cytoplasmic side of the membrane. Ser-534 contacts a 1,2-diacyl-sn-glycero-3-phospho-(1D-myo-inositol-4,5-bisphosphate). The chain crosses the membrane as a helical span at residues 535–556 (SFNCFDFGVIVGSIFEVVWTAV). Over 557 to 563 (KPDTSFG) the chain is Extracellular. A helical membrane pass occupies residues 564–576 (ISVLRALRLLRIF). The a 1,2-diacyl-sn-glycero-3-phospho-(1D-myo-inositol-4,5-bisphosphate) site is built by Arg-574 and Lys-577. Over 577–594 (KVTKYWNSLRNLVVSLLN) the chain is Cytoplasmic. The helical transmembrane segment at 595-620 (SMKSIISLLFLLFLFIVVFALLGMQL) threads the bilayer. Residues 621 to 672 (FGGQFNFEDGTPPTNFDTFPAAILTVFQILTGEDWNEVMYYGIEAHGGVKKG) are Extracellular-facing. Residues 673 to 699 (MFSSVYFIILTLFGNYTLLNVFLAIAV) form a helical membrane-spanning segment. Residues 700–1148 (DNLANAQELT…ACHYIVNLRY (449 aa)) lie on the Cytoplasmic side of the membrane. Residues 793 to 1048 (SHQIRPDMKT…LQHLPQQPED (256 aa)) form a disordered region. 5 stretches are compositionally biased toward basic and acidic residues: residues 796–808 (IRPD…DRPL), 854–879 (KLGE…DDKR), 886–908 (SKET…SHEG), 935–979 (HGTE…EGAE), and 994–1011 (SEEK…VLRE). Residues 1020 to 1032 (TQPSQDSGTQGNV) show a composition bias toward polar residues. The III repeat unit spans residues 1134 to 1416 (NPVRRACHYI…IFVALIIITF (283 aa)). Residues 1149–1167 (FEMCILLVITMSSIALAAE) form a helical membrane-spanning segment. Topologically, residues 1168 to 1175 (DPVQGDAP) are extracellular. A helical membrane pass occupies residues 1176–1200 (RNNVLKYLDYVFTGVFTFEMVIKMI). Over 1201 to 1214 (NLGLILHPGSYFRD) the chain is Cytoplasmic. A helical transmembrane segment spans residues 1215-1235 (LWNILDFIVVSGALVAFAFTG). Topologically, residues 1236–1241 (SRGKDL) are extracellular. Residues 1242-1262 (NTIKSLRVLRVLRPLKTIKRL) traverse the membrane as a helical segment. The Cytoplasmic segment spans residues 1263–1280 (PKLKAVFDCVVNSLKNVL). Residues 1281–1300 (NILIVYMLFMFIFAVIAVQL) form a helical membrane-spanning segment. Over 1301-1387 (FKGKFFYCTD…DQGPSPSYRM (87 aa)) the chain is Extracellular. A helical transmembrane segment spans residues 1388–1413 (EMSIFYVVYFVVFPFFFVNIFVALII). The Cytoplasmic segment spans residues 1414-1468 (ITFQEQGDKVMSDCSLEKNERACIDFAISAKPLTRYMPQNKQTFQYKMWKFVVSP). One copy of the IV repeat lies at 1453-1708 (NKQTFQYKMW…LFVAVIMDNF (256 aa)). Residues 1469–1487 (PFEYLIMALIALNTIVLMM) form a helical membrane-spanning segment. Topologically, residues 1488–1495 (KFYNAPDP) are extracellular. Residues 1496–1520 (YDRMLQYLNILFTFLFSMECVLKLI) traverse the membrane as a helical segment. Residues 1521 to 1530 (GFGVLNYFRD) lie on the Cytoplasmic side of the membrane. The chain crosses the membrane as a helical span at residues 1531-1552 (AWNVFDFVTVLGSITDILVTEL). The Extracellular portion of the chain corresponds to 1553-1558 (ADSFIN). N-linked (GlcNAc...) asparagine glycosylation occurs at Asn-1558. Residues 1559 to 1577 (LSFLRLFRAARLIKLLRQG) form a helical membrane-spanning segment. Residues 1578–1596 (YTIRILLWTFVQSFKALPY) lie on the Cytoplasmic side of the membrane. Residues 1597-1616 (VCLLIAMLFFIYAIIGMQVF) form a helical membrane-spanning segment. Over 1617–1680 (GNIELDDDGA…IDGDECGSNF (64 aa)) the chain is Extracellular. The chain crosses the membrane as a helical span at residues 1681–1704 (AYFYFVSFIFFSSFLMLNLFVAVI). At 1705-2326 (MDNFEYLTRD…YRETDEDDWC (622 aa)) the chain is on the cytoplasmic side. Residues 1721–1756 (HHLDEFIRVWAEYDPGARGRITYNDMYEMLRHMCPP) enclose the EF-hand domain. Positions 1734, 1740, and 1745 each coordinate Ca(2+). Over residues 1897–1912 (EEPSSYSTSHKNSVNP) the composition is skewed to polar residues. 4 disordered regions span residues 1897–1916 (EEPS…LYQG), 1932–1954 (CAEG…KSSS), 2039–2242 (PHHH…SSDP), and 2271–2326 (TTAT…DDWC). Basic and acidic residues predominate over residues 1932–1948 (CAEGKKEVPESHPEEAG). Residues 2039 to 2055 (PHHHHHHHRCHHRREKK) are compositionally biased toward basic residues. 2 stretches are compositionally biased toward basic and acidic residues: residues 2056–2069 (QRSL…HADE) and 2077–2104 (QLRD…EKQR). Composition is skewed to polar residues over residues 2142–2161 (GSGS…STPS), 2275–2289 (GRSP…QPPQ), and 2302–2311 (GRSTGPSTAA).

Belongs to the calcium channel alpha-1 subunit (TC 1.A.1.11) family. In terms of assembly, multisubunit complex consisting of alpha-1, alpha-2, beta and delta subunits in a 1:1:1:1 ratio. The channel activity is directed by the pore-forming and voltage-sensitive alpha-1 subunit. In many cases, this subunit is sufficient to generate voltage-sensitive calcium channel activity. The auxiliary subunits beta and alpha-2/delta linked by a disulfide bridge regulate the channel activity. In terms of processing, phosphorylated in vitro by CaM-kinase II, PKA, PKC and CGPK. Expression is higher in the electric lobe than in the forebrain.

Its subcellular location is the membrane. Functionally, the isoform alpha-1B gives rise to N-type calcium currents. N-type calcium channels belong to the 'high-voltage activated' (HVA) group. This Diplobatis ommata (Ocellated electric ray) protein is Probable voltage-dependent N-type calcium channel subunit alpha-1B.